The primary structure comprises 329 residues: tRNA-modifying protein YgfZ (329 aa).

2 residues coordinate folate: Trp27 and Trp189.

Belongs to the tRNA-modifying YgfZ family.

It localises to the cytoplasm. Folate-binding protein involved in regulating the level of ATP-DnaA and in the modification of some tRNAs. It is probably a key factor in regulatory networks that act via tRNA modification, such as initiation of chromosomal replication. The polypeptide is tRNA-modifying protein YgfZ (Cronobacter sakazakii (strain ATCC BAA-894) (Enterobacter sakazakii)).